The sequence spans 1437 residues: Histone-lysine N-methyltransferase NSD3 (1437 aa).

2 disordered regions span residues 121 to 157 (PHEI…KLKI) and 181 to 252 (QASE…PVQP). The span at 128 to 139 (PSPPQPPPPPSV) shows a compositional bias: pro residues. Serine 150 carries the phosphoserine modification. Residues 154-157 (KLKI) carry the KIKL motif. Residues 187–201 (KSKHESRKEKRKKSN) are compositionally biased toward basic residues. Positions 202-248 (KHDSSRSEERKSHKIPKLEPEEQNRPNERVDTVSEKPREEPVLKEEA) are enriched in basic and acidic residues. Residues lysine 218 and lysine 245 each participate in a glycyl lysine isopeptide (Lys-Gly) (interchain with G-Cter in SUMO2) cross-link. Residues 270-333 (VGDLVWSKVG…EKRVREYKGH (64 aa)) form the PWWP 1 domain. Disordered regions lie at residues 344 to 365 (TKQA…QRER) and 406 to 465 (AKKS…EPPP). Lysine 413 is covalently cross-linked (Glycyl lysine isopeptide (Lys-Gly) (interchain with G-Cter in SUMO2)). A compositionally biased stretch (polar residues) spans 425–445 (VLNTQPEQTNAGEVASSLSST). Serine 457 carries the post-translational modification Phosphoserine. Residues lysine 502 and lysine 532 each participate in a glycyl lysine isopeptide (Lys-Gly) (interchain with G-Cter in SUMO2) cross-link. Residues 540 to 696 (QDRLIISTPN…DSSLSRRGTG (157 aa)) are disordered. A compositionally biased stretch (polar residues) spans 546-571 (STPNQRNEKPTQSVSSPEATSGSTGS). Basic and acidic residues predominate over residues 583-595 (TRSESEKSTEVVP). Phosphoserine occurs at positions 585, 587, and 590. Lysine 628 is covalently cross-linked (Glycyl lysine isopeptide (Lys-Gly) (interchain with G-Cter in SUMO2)). Serine 655 carries the post-translational modification Phosphoserine. The segment covering 682-692 (DVQSMDSSLSR) has biased composition (polar residues). 3 PHD-type zinc fingers span residues 701 to 748 (DTVC…CKTG), 749 to 805 (QHPC…CSME), and 862 to 955 (VGFC…CKAG). The residue at position 790 (lysine 790) is an N6-acetyllysine. In terms of domain architecture, PWWP 2 spans 960–1022 (YKQIVWVKLG…QGRVFPYVEG (63 aa)). Residues 1033–1069 (INKTFKKALEEAAKRFQELKAQRESKEALEIEKNSRK) adopt a coiled-coil conformation. Residues 1093 to 1143 (SEIPRCNCKPADENPCGLESECLNRMLQYECHPQVCPAGDRCQNQCFTKRL) form the AWS domain. The 118-residue stretch at 1145–1262 (PDAEIIKTER…AGMELTFNYN (118 aa)) folds into the SET domain. Residue lysine 1151 forms a Glycyl lysine isopeptide (Lys-Gly) (interchain with G-Cter in SUMO2) linkage. The Post-SET domain maps to 1269 to 1285 (GRTECHCGADNCSGFLG). The PHD-type 4; atypical zinc finger occupies 1321–1368 (EDYCFQCGDGGELVMCDKKDCPKAYHLLCLNLTQPPYGKWECPWHQCD).

Belongs to the class V-like SAM-binding methyltransferase superfamily. Histone-lysine methyltransferase family. SET2 subfamily. As to quaternary structure, interacts with BRD4. Interacts (via KIKL motif) with BRD3 (via NET domain). In terms of tissue distribution, highly expressed in brain, heart and skeletal muscle. Expressed at lower level in liver and lung.

Its subcellular location is the nucleus. The protein resides in the chromosome. It catalyses the reaction L-lysyl(4)-[histone H3] + 2 S-adenosyl-L-methionine = N(6),N(6)-dimethyl-L-lysyl(4)-[histone H3] + 2 S-adenosyl-L-homocysteine + 2 H(+). The catalysed reaction is L-lysyl(27)-[histone H3] + 2 S-adenosyl-L-methionine = N(6),N(6)-dimethyl-L-lysyl(27)-[histone H3] + 2 S-adenosyl-L-homocysteine + 2 H(+). Functionally, histone methyltransferase. Preferentially dimethylates 'Lys-4' and 'Lys-27' of histone H3 forming H3K4me2 and H3K27me2. H3 'Lys-4' methylation represents a specific tag for epigenetic transcriptional activation, while 'Lys-27' is a mark for transcriptional repression. This Homo sapiens (Human) protein is Histone-lysine N-methyltransferase NSD3.